The sequence spans 284 residues: Actin-like protein ARP10 (284 aa).

The protein belongs to the actin family. ARP10 subfamily. As to quaternary structure, self-associates. Component of the dynactin complex composed of at least ARP1, JNM1, NIP100 and ARP10. Dynactin comprises a short rod of the ARP1 filament attached to ARP10 at its pointed-end and probably associated with the capping protein at its barbed-end. The rod is implicated in dynein cargo binding. A sidearm formed by NIP100 projects from the ARP1 filament and is implicated in motor binding. Interacts with ARP1 and JNM1.

The protein localises to the cytoplasm. It is found in the cytoskeleton. Functionally, pointed-end-associated component of the dynactin complex which assists cytoplasmic dynein by increasing its processivity and by regulation of its cargo binding. The dynactin complex is required for the spindle translocation late in anaphase and is involved in a cell wall synthesis checkpoint. May regulate the association of the dynactin complex with the plasma membrane. The polypeptide is Actin-like protein ARP10 (ARP10) (Saccharomyces cerevisiae (strain ATCC 204508 / S288c) (Baker's yeast)).